Consider the following 662-residue polypeptide: DNA topoisomerase 4 subunit B (662 aa).

Residues Tyr-20, Asn-60, Asp-87, 129 to 135 (GLHGVGI), and Lys-359 contribute to the ATP site. Residues 439–553 (TELFIVEGDS…EGHLYLAKPP (115 aa)) form the Toprim domain. Residues Glu-445, Asp-518, and Asp-520 each contribute to the Mg(2+) site.

This sequence belongs to the type II topoisomerase family. ParE type 1 subfamily. In terms of assembly, heterotetramer composed of ParC and ParE. It depends on Mg(2+) as a cofactor. Mn(2+) is required as a cofactor. Requires Ca(2+) as cofactor.

The enzyme catalyses ATP-dependent breakage, passage and rejoining of double-stranded DNA.. Topoisomerase IV is essential for chromosome segregation. It relaxes supercoiled DNA. Performs the decatenation events required during the replication of a circular DNA molecule. The polypeptide is DNA topoisomerase 4 subunit B (Rickettsia prowazekii (strain Madrid E)).